A 418-amino-acid chain; its full sequence is MKREREAPSRAFSALRLAPFVYLLLIQTEPLEGVNITSPVRLIHGTVGKAALLSVQYSSTSSDKPVVKWQLKRDKPVTVVQSIGTEVIGTLRPDYRDRIRLFENGSLLLSDLQLADEGTYEVEISITDDTFTGEKTINLTVDVPISRPQVLVASTTVLELSEAFTLNCSHENGTKPSYTWLKDGKPLLNDSRMLLSPDQKVLTITRVLMEDDDLYSCVVENPISQGRSPPVKITVYRRSSLYIILSTGGIFLLVTLVTVCACWKPSKKSGKKRKLEKQNSMEYMDQSDDRLKPEADTLPRSGEQERKNPMALYILKDKDSPEPEENPASEPRSAAEPGPPGYSVSPAVPGRSPGLPIRSARRYPRSPARSPATGRTHSSPPRAPGSPGRSRSASRTLRTAGVHLIREQDEAGPVEISA.

An N-terminal signal peptide occupies residues Met-1 to Gly-33. Residues Val-34 to Val-141 enclose the Ig-like V-type domain. Topologically, residues Val-34–Ser-240 are extracellular. N-linked (GlcNAc...) asparagine glycosylation is found at Asn-35, Asn-138, Asn-167, and Asn-189. The 87-residue stretch at Pro-148 to Thr-234 folds into the Ig-like C2-type domain. Cysteines 168 and 217 form a disulfide. The helical transmembrane segment at Leu-241–Ala-261 threads the bilayer. Over Cys-262–Ala-418 the chain is Cytoplasmic. A disordered region spans residues Lys-271–Ala-418. The residue at position 280 (Ser-280) is a Phosphoserine. Positions Ser-287 to Asn-308 are enriched in basic and acidic residues. 2 positions are modified to phosphoserine: Ser-352 and Ser-379. Residues Gly-385–Ala-400 are compositionally biased toward low complexity.

As to quaternary structure, homodimer. Dimer formation occurs predominantly through cis interactions on the cell surface. Part of a complex containing MLC1, TRPV4, AQP4 and ATP1B1. Interacts with CLCN2. Post-translationally, N-glycosylated.

The protein localises to the cytoplasm. It localises to the cell membrane. Its function is as follows. Involved in regulating cell motility and cell-matrix interactions. May inhibit cell growth through suppression of cell proliferation. In glia, associates and targets CLCN2 at astrocytic processes and myelinated fiber tracts where it may regulate transcellular chloride flux involved in neuron excitability. This chain is Hepatic and glial cell adhesion molecule, found in Bos taurus (Bovine).